A 132-amino-acid chain; its full sequence is Thioredoxin H4-2 (132 aa).

The region spanning 18 to 130 (DFKGGNVHVI…LEKKVQALAD (113 aa)) is the Thioredoxin domain. Catalysis depends on nucleophile residues C56 and C59. A disulfide bridge links C56 with C59.

This sequence belongs to the thioredoxin family. Plant H-type subfamily.

The protein localises to the cytoplasm. Its function is as follows. Probable thiol-disulfide oxidoreductase that may be involved in the redox regulation of a number of cytosolic enzymes. The polypeptide is Thioredoxin H4-2 (Oryza sativa subsp. japonica (Rice)).